We begin with the raw amino-acid sequence, 292 residues long: Cbb3-type cytochrome c oxidase subunit CcoP (292 aa).

A run of 2 helical transmembrane segments spans residues 11 to 31 and 62 to 82; these read FGLI…SSLI and VGWI…FFFG. Cytochrome c domains are found at residues 116-195 and 205-288; these read ELVD…MAEI and QLID…QSLK. The heme c site is built by C129, C132, H133, M174, C219, C222, H223, and M264.

This sequence belongs to the CcoP / FixP family. In terms of assembly, component of the cbb3-type cytochrome c oxidase at least composed of CcoN, CcoO, CcoQ and CcoP. Heme c is required as a cofactor.

The protein localises to the cell inner membrane. The protein operates within energy metabolism; oxidative phosphorylation. In terms of biological role, C-type cytochrome. Part of the cbb3-type cytochrome c oxidase complex. CcoP subunit is required for transferring electrons from donor cytochrome c via its heme groups to CcoO subunit. From there, electrons are shuttled to the catalytic binuclear center of CcoN subunit where oxygen reduction takes place. The complex also functions as a proton pump. The sequence is that of Cbb3-type cytochrome c oxidase subunit CcoP from Helicobacter pylori (strain 52).